The sequence spans 224 residues: 7-cyano-7-deazaguanine synthase (224 aa).

Residue 10–20 (LSGGLDSATVV) participates in ATP binding. 4 residues coordinate Zn(2+): Cys-189, Cys-199, Cys-202, and Cys-205.

It belongs to the QueC family. Requires Zn(2+) as cofactor.

It carries out the reaction 7-carboxy-7-deazaguanine + NH4(+) + ATP = 7-cyano-7-deazaguanine + ADP + phosphate + H2O + H(+). It participates in purine metabolism; 7-cyano-7-deazaguanine biosynthesis. In terms of biological role, catalyzes the ATP-dependent conversion of 7-carboxy-7-deazaguanine (CDG) to 7-cyano-7-deazaguanine (preQ(0)). This is 7-cyano-7-deazaguanine synthase from Pseudomonas fluorescens (strain SBW25).